We begin with the raw amino-acid sequence, 177 residues long: Ubiquinol-cytochrome c reductase iron-sulfur subunit (177 aa).

A helical membrane pass occupies residues 18–38 (MVLTASSVAAVGAVCTLWPLV). The 88-residue stretch at 88-175 (ARAVKMSELI…YTFISDKKIR (88 aa)) folds into the Rieske domain. [2Fe-2S] cluster is bound by residues Cys-120, His-122, Cys-139, and His-142. An intrachain disulfide couples Cys-125 to Cys-141.

The protein belongs to the Rieske iron-sulfur protein family. As to quaternary structure, the main subunits of complex b-c1 are: cytochrome b, cytochrome c1 and the Rieske protein. Requires [2Fe-2S] cluster as cofactor.

The protein resides in the cell membrane. The catalysed reaction is a quinol + 2 Fe(III)-[cytochrome c](out) = a quinone + 2 Fe(II)-[cytochrome c](out) + 2 H(+)(out). Component of the ubiquinol-cytochrome c reductase complex (complex III or cytochrome b-c1 complex), which is a respiratory chain that generates an electrochemical potential coupled to ATP synthesis. The sequence is that of Ubiquinol-cytochrome c reductase iron-sulfur subunit (petA) from Rickettsia felis (strain ATCC VR-1525 / URRWXCal2) (Rickettsia azadi).